Here is a 415-residue protein sequence, read N- to C-terminus: Serine--tRNA ligase (415 aa).

231 to 233 is a binding site for L-serine; sequence TAE. 262–264 contacts ATP; it reads RSE. Residue Glu-285 participates in L-serine binding. Position 349–352 (349–352) interacts with ATP; sequence EISS. Ser-383 lines the L-serine pocket.

Belongs to the class-II aminoacyl-tRNA synthetase family. Type-1 seryl-tRNA synthetase subfamily. As to quaternary structure, homodimer. The tRNA molecule binds across the dimer.

The protein resides in the cytoplasm. The enzyme catalyses tRNA(Ser) + L-serine + ATP = L-seryl-tRNA(Ser) + AMP + diphosphate + H(+). The catalysed reaction is tRNA(Sec) + L-serine + ATP = L-seryl-tRNA(Sec) + AMP + diphosphate + H(+). It functions in the pathway aminoacyl-tRNA biosynthesis; selenocysteinyl-tRNA(Sec) biosynthesis; L-seryl-tRNA(Sec) from L-serine and tRNA(Sec): step 1/1. Functionally, catalyzes the attachment of serine to tRNA(Ser). Is also able to aminoacylate tRNA(Sec) with serine, to form the misacylated tRNA L-seryl-tRNA(Sec), which will be further converted into selenocysteinyl-tRNA(Sec). This Helicobacter pylori (strain G27) protein is Serine--tRNA ligase.